Reading from the N-terminus, the 356-residue chain is MDAGPAPAREPRRIRVLVVDDSAVVRNVFQQELSADPGIEVVGTAPDPFAARDLILERAPDVITLDVEMPRMDGITFLHKIMRYRPTPVIVVSSLTPAGGALALEALAAGACDVMCKPGAAYSVGEMTADLVEKVKEAAAAGVRAPAPLPPPDRAATPRALARTTLQVVAIGASTGGTVAIERILAALPPGAPGIVVTQHMPELFTRYFANRLRDRSGLDAREAQGGESVVPGTVLVAPGSRHMLLRRSGARYVVEIKDGPRVNRHRPSVDVMFRSVARAAGPNAIGVILTGMGGDGAQGLRAMRDAGARTVAQDEASCVVYGMPKVAVELGAVERSLPLDRIAPEILRLAGEAGG.

In terms of domain architecture, Response regulatory spans 15 to 132; that stretch reads RVLVVDDSAV…SVGEMTADLV (118 aa). Asp66 is modified (4-aspartylphosphate). Residues 162 to 348 form the CheB-type methylesterase domain; that stretch reads ARTTLQVVAI…PLDRIAPEIL (187 aa). Active-site residues include Ser174, His200, and Asp296.

It belongs to the CheB family. Phosphorylated by CheA. Phosphorylation of the N-terminal regulatory domain activates the methylesterase activity.

The protein resides in the cytoplasm. It catalyses the reaction [protein]-L-glutamate 5-O-methyl ester + H2O = L-glutamyl-[protein] + methanol + H(+). The catalysed reaction is L-glutaminyl-[protein] + H2O = L-glutamyl-[protein] + NH4(+). Its function is as follows. Involved in chemotaxis. Part of a chemotaxis signal transduction system that modulates chemotaxis in response to various stimuli. Catalyzes the demethylation of specific methylglutamate residues introduced into the chemoreceptors (methyl-accepting chemotaxis proteins or MCP) by CheR. Also mediates the irreversible deamidation of specific glutamine residues to glutamic acid. This chain is Protein-glutamate methylesterase/protein-glutamine glutaminase 4, found in Anaeromyxobacter dehalogenans (strain 2CP-C).